A 114-amino-acid chain; its full sequence is rRNA-processing protein cgrA (114 aa).

A compositionally biased stretch (polar residues) spans 1–11 (MSSAIPTSSVN). A disordered region spans residues 1 to 114 (MSSAIPTSSV…REKRNKLLHS (114 aa)). Positions 39 to 93 (YEKRLEARKRQEAVKEHERELREEKEAERKAQIQKIKDRRAAKEEKERYEKMAEK) are enriched in basic and acidic residues. A coiled-coil region spans residues 40–101 (EKRLEARKRQ…EKMHRKRVER (62 aa)). The span at 94–114 (MHRKRVERLKRREKRNKLLHS) shows a compositional bias: basic residues.

This sequence belongs to the CGR1 family.

It localises to the nucleus. Its subcellular location is the nucleolus. Functionally, involved in nucleolar integrity and required for processing of the pre-rRNA for the 60S ribosome subunit. The polypeptide is rRNA-processing protein cgrA (cgrA) (Aspergillus fumigatus (strain ATCC MYA-4609 / CBS 101355 / FGSC A1100 / Af293) (Neosartorya fumigata)).